We begin with the raw amino-acid sequence, 152 residues long: Ribosome maturation factor RimP (152 aa).

It belongs to the RimP family.

The protein resides in the cytoplasm. Functionally, required for maturation of 30S ribosomal subunits. The sequence is that of Ribosome maturation factor RimP from Porphyromonas gingivalis (strain ATCC BAA-308 / W83).